A 644-amino-acid chain; its full sequence is Acetyl-coenzyme A synthetase (644 aa).

Residues 190-193 (RGSK) and Thr-308 contribute to the CoA site. ATP-binding positions include 384–386 (GEP), 408–413 (DTWWQT), Asp-497, and Arg-512. Ser-520 contacts CoA. Arg-523 is a binding site for ATP. Val-534, His-536, and Val-539 together coordinate Mg(2+). Position 581 (Arg-581) interacts with CoA. At Lys-606 the chain carries N6-acetyllysine.

It belongs to the ATP-dependent AMP-binding enzyme family. The cofactor is Mg(2+). In terms of processing, acetylated. Deacetylation by the SIR2-homolog deacetylase activates the enzyme.

It catalyses the reaction acetate + ATP + CoA = acetyl-CoA + AMP + diphosphate. Catalyzes the conversion of acetate into acetyl-CoA (AcCoA), an essential intermediate at the junction of anabolic and catabolic pathways. AcsA undergoes a two-step reaction. In the first half reaction, AcsA combines acetate with ATP to form acetyl-adenylate (AcAMP) intermediate. In the second half reaction, it can then transfer the acetyl group from AcAMP to the sulfhydryl group of CoA, forming the product AcCoA. This is Acetyl-coenzyme A synthetase from Magnetococcus marinus (strain ATCC BAA-1437 / JCM 17883 / MC-1).